We begin with the raw amino-acid sequence, 245 residues long: Eukaryotic translation initiation factor 6 (245 aa).

Residue tyrosine 113 is modified to Phosphotyrosine. Phosphothreonine is present on threonine 165. A Phosphoserine modification is found at serine 166. A phosphoserine; by CK1 mark is found at serine 174 and serine 175. Serine 235 carries the post-translational modification Phosphoserine; by PKC. A phosphoserine mark is found at serine 239 and serine 243.

This sequence belongs to the eIF-6 family. Monomer. Associates with the 60S ribosomal subunit. Interacts with RACK1. Interacts with DICER1, AGO2, TARBP2, MOV10 and RPL7A; they form a large RNA-induced silencing complex (RISC). Post-translationally, phosphorylation at Ser-174 and Ser-175 by CSNK1D/CK1 promotes nuclear export. In terms of processing, ufmylated by UFL1.

It is found in the cytoplasm. It localises to the nucleus. The protein localises to the nucleolus. In terms of biological role, binds to the 60S ribosomal subunit and prevents its association with the 40S ribosomal subunit to form the 80S initiation complex in the cytoplasm. Behaves as a stimulatory translation initiation factor downstream insulin/growth factors. Is also involved in ribosome biogenesis. Associates with pre-60S subunits in the nucleus and is involved in its nuclear export. Cytoplasmic release of TIF6 from 60S subunits and nuclear relocalization is promoted by a RACK1 (RACK1)-dependent protein kinase C activity. In tissues responsive to insulin, controls fatty acid synthesis and glycolysis by exerting translational control of adipogenic transcription factors such as CEBPB, CEBPD and ATF4 that have G/C rich or uORF in their 5'UTR. Required for ROS-dependent megakaryocyte maturation and platelets formation, controls the expression of mitochondrial respiratory chain genes involved in reactive oxygen species (ROS) synthesis. Involved in miRNA-mediated gene silencing by the RNA-induced silencing complex (RISC). Required for both miRNA-mediated translational repression and miRNA-mediated cleavage of complementary mRNAs by RISC. Modulates cell cycle progression and global translation of pre-B cells, its activation seems to be rate-limiting in tumorigenesis and tumor growth. This is Eukaryotic translation initiation factor 6 from Bos taurus (Bovine).